The sequence spans 343 residues: Holliday junction branch migration complex subunit RuvB (343 aa).

Positions 1–182 (MRDELLNTPT…FGISNRLDYY (182 aa)) are large ATPase domain (RuvB-L). ATP is bound by residues isoleucine 21, arginine 22, glycine 63, lysine 66, threonine 67, threonine 68, 129–131 (EDF), arginine 172, tyrosine 182, and arginine 219. Residue threonine 67 participates in Mg(2+) binding. Positions 183–253 (SAELLQRIII…LARKTLAALE (71 aa)) are small ATPAse domain (RuvB-S). The segment at 256–343 (EDGLDDMDKK…DGPLFQKGSS (88 aa)) is head domain (RuvB-H). Positions 311 and 316 each coordinate DNA.

It belongs to the RuvB family. As to quaternary structure, homohexamer. Forms an RuvA(8)-RuvB(12)-Holliday junction (HJ) complex. HJ DNA is sandwiched between 2 RuvA tetramers; dsDNA enters through RuvA and exits via RuvB. An RuvB hexamer assembles on each DNA strand where it exits the tetramer. Each RuvB hexamer is contacted by two RuvA subunits (via domain III) on 2 adjacent RuvB subunits; this complex drives branch migration. In the full resolvosome a probable DNA-RuvA(4)-RuvB(12)-RuvC(2) complex forms which resolves the HJ.

Its subcellular location is the cytoplasm. It carries out the reaction ATP + H2O = ADP + phosphate + H(+). Its function is as follows. The RuvA-RuvB-RuvC complex processes Holliday junction (HJ) DNA during genetic recombination and DNA repair, while the RuvA-RuvB complex plays an important role in the rescue of blocked DNA replication forks via replication fork reversal (RFR). RuvA specifically binds to HJ cruciform DNA, conferring on it an open structure. The RuvB hexamer acts as an ATP-dependent pump, pulling dsDNA into and through the RuvAB complex. RuvB forms 2 homohexamers on either side of HJ DNA bound by 1 or 2 RuvA tetramers; 4 subunits per hexamer contact DNA at a time. Coordinated motions by a converter formed by DNA-disengaged RuvB subunits stimulates ATP hydrolysis and nucleotide exchange. Immobilization of the converter enables RuvB to convert the ATP-contained energy into a lever motion, pulling 2 nucleotides of DNA out of the RuvA tetramer per ATP hydrolyzed, thus driving DNA branch migration. The RuvB motors rotate together with the DNA substrate, which together with the progressing nucleotide cycle form the mechanistic basis for DNA recombination by continuous HJ branch migration. Branch migration allows RuvC to scan DNA until it finds its consensus sequence, where it cleaves and resolves cruciform DNA. The polypeptide is Holliday junction branch migration complex subunit RuvB (Prosthecochloris aestuarii (strain DSM 271 / SK 413)).